The sequence spans 246 residues: MLGRQRIWWHLLPLLFLPFCLCQDEYMESPQAGGLPPDCSKCCHGDYGFRGYQGPPGPPGPPGIPGNHGNNGNNGATGHEGAKGEKGDKGDLGPRGERGQHGPKGEKGYPGVPPELQIAFMASLATHFSNQNSGIIFSSVETNIGNFFDVMTGRFGAPVSGVYFFTFSMMKHEDVEEVYVYLMHNGNTVFSMYSYETKGKSDTSSNHAVLKLAKGDEVWLRMGNGALHGDHQRFSTFAGFLLFETK.

A signal peptide spans 1-22 (MLGRQRIWWHLLPLLFLPFCLC). The Collagen-like domain maps to 51–113 (GYQGPPGPPG…KGEKGYPGVP (63 aa)). Residues 53-112 (QGPPGPPGPPGIPGNHGNNGNNGATGHEGAKGEKGDKGDLGPRGERGQHGPKGEKGYPGV) form a disordered region. The segment covering 55–64 (PPGPPGPPGI) has biased composition (pro residues). A compositionally biased stretch (low complexity) spans 65-74 (PGNHGNNGNN). The segment covering 80–107 (EGAKGEKGDKGDLGPRGERGQHGPKGEK) has biased composition (basic and acidic residues). The C1q domain maps to 113-246 (PPELQIAFMA…FAGFLLFETK (134 aa)).

The protein localises to the secreted. In Mus musculus (Mouse), this protein is Complement C1q tumor necrosis factor-related protein 3 (C1qtnf3).